A 472-amino-acid polypeptide reads, in one-letter code: Eukaryotic translation initiation factor 2 subunit 3 (472 aa).

Position 2 is an N-acetylalanine; partial (alanine 2). One can recognise a tr-type G domain in the interval 39-247 (QATINIGTIG…YIVKKIPVPL (209 aa)). The G1 stretch occupies residues 48-55 (GHVAHGKS). 51 to 56 (AHGKST) is a GTP binding site. Residues 76 to 80 (NITIK) form a G2 region. Residues 134–137 (DCPG) are G3. GTP is bound by residues 190-193 (NKID) and 225-227 (SAQ). The segment at 190 to 193 (NKID) is G4. Residues 225–227 (SAQ) are G5. Positions 457-469 (GQIRRGVTIKPTV) are interacts with CDC123.

Belongs to the TRAFAC class translation factor GTPase superfamily. Classic translation factor GTPase family. EIF2G subfamily. In terms of assembly, eukaryotic translation initiation factor 2 eIF2 is a heterotrimeric complex composed of an alpha (EIF2S1), a beta (EIF2S2) and a gamma (EIF2S3) chain. eIF2 is member of the 43S pre-initiation complex (43S PIC).

It localises to the cytoplasm. The protein localises to the cytosol. The catalysed reaction is GTP + H2O = GDP + phosphate + H(+). Functionally, member of the eIF2 complex that functions in the early steps of protein synthesis by forming a ternary complex with GTP and initiator tRNA. This complex binds to a 40S ribosomal subunit, followed by mRNA binding to form the 43S pre-initiation complex (43S PIC). Junction of the 60S ribosomal subunit to form the 80S initiation complex is preceded by hydrolysis of the GTP bound to eIF2 and release of an eIF2-GDP binary complex. In order for eIF2 to recycle and catalyze another round of initiation, the GDP bound to eIF2 must exchange with GTP by way of a reaction catalyzed by eIF-2B. This is Eukaryotic translation initiation factor 2 subunit 3 (EIF2S3) from Gallus gallus (Chicken).